The following is a 62-amino-acid chain: U10-hottentoxin-Hj3a (62 aa).

A signal peptide spans 1 to 22 (MQKLLIILILFCILKFNVDVEG). 3 disulfide bridges follow: Cys-28/Cys-46, Cys-33/Cys-59, and Cys-37/Cys-61.

Belongs to the short scorpion toxin superfamily. Potassium channel inhibitor family. Alpha-KTx 23 subfamily. In terms of tissue distribution, expressed by the venom gland.

The protein localises to the secreted. In terms of biological role, may block potassium channels. This Hottentotta judaicus (Black scorpion) protein is U10-hottentoxin-Hj3a.